The following is a 308-amino-acid chain: Polyketide transferase claH (308 aa).

An abhydrolase domain region spans residues 50–280; sequence SDIAVYFSQQ…RVEVAAGKSH (231 aa).

It belongs to the polyketide transferase af380 family.

It participates in secondary metabolite biosynthesis. In terms of biological role, polyketide transferase; part of the cla gene cluster that produces clavatol and ortho-quinone methide. The clavatol biosynthesis cluster cla and the terrestric acid cluster tra are both involved in the production of peniphenones and penilactones. The non-reducing PKS claF is responsible for the formation of clavatol from successive condensations of 3 malonyl-CoA units, presumably with a simple acetyl-CoA starter unit, and 2 methylation steps. The esterase claE probably collaborates with claF by catalyzing the hydrolysis of ACP-bound acyl intermediates to free the ACP from stalled intermediates. The clavatol oxidase claD then converts clavatol to hydroxyclavatol. Spontaneous dehydration of hydroxyclavatol leads to the accumulation of the highly active ortho-quinone methide. On the other hand, the PKS-NRPS hybrid traA is involved in the formation of crustosic acid, with the help of traB and traD. The polyketide synthase module (PKS) of traA is responsible for the synthesis of the polyketide backbone via the condensation of an acetyl-CoA starter unit with 3 malonyl-CoA units. The downstream nonribosomal peptide synthetase (NRPS) module then amidates the carboxyl end of the polyketide with L-malic acid. Because traA lacks a designated enoylreductase (ER) domain, the required activity is provided the enoyl reductase traG. Crustosic acid undergoes decarboxylation and isomerization to the terrestric acid, catalyzed by the 2-oxoglutarate-dependent dioxygenase traH. Both acids are further converted to the 2 gamma-butyrolactones (R)-5-methyltetronic acid and (S)-5-carboxylmethyltetronic acid, with involvement of the cytochrome P450 monooxygenase claJ. Spontaneous addition of the methide to these gamma-butyrolactones leads to peniphenone D and penilactone D, which undergo again stereospecific attacking by methide to give penilactones A and B. The function of the polyketide transferase claH has not been investigated yet. The protein is Polyketide transferase claH of Penicillium crustosum (Blue mold fungus).